The following is a 203-amino-acid chain: Outer-membrane lipoprotein carrier protein (203 aa).

The signal sequence occupies residues 1–21 (MKKLLVACCLLSGFASTSVLA).

It belongs to the LolA family. As to quaternary structure, monomer.

It is found in the periplasm. In terms of biological role, participates in the translocation of lipoproteins from the inner membrane to the outer membrane. Only forms a complex with a lipoprotein if the residue after the N-terminal Cys is not an aspartate (The Asp acts as a targeting signal to indicate that the lipoprotein should stay in the inner membrane). This Serratia proteamaculans (strain 568) protein is Outer-membrane lipoprotein carrier protein.